The following is a 240-amino-acid chain: Eukaryotic translation initiation factor 4E-3 (240 aa).

Residues M1–N51 form a disordered region. Residues I17–S26 show a composition bias toward polar residues. A compositionally biased stretch (basic and acidic residues) spans S39–N51. EIF4G-binding stretches follow at residues H65 to Q68 and F75 to H111. MRNA is bound by residues N83–G88, K115, and W133–E134. Residues C138 and C176 are joined by a disulfide bond. An EIF4G-binding region spans residues N159 to Q168. MRNA-binding positions include R183–R188 and K228–R232.

It belongs to the eukaryotic initiation factor 4E family. In terms of assembly, EIF4F is a multi-subunit complex, the composition of which varies with external and internal environmental conditions. It is composed of at least EIF4A, EIF4E and EIF4G. EIF4E is also known to interact with other partners. In higher plants two isoforms of EIF4F have been identified, named isoform EIF4F and isoform EIF(iso)4F. Isoform EIF4F has subunits p220 and p26, whereas isoform EIF(iso)4F has subunits p82 and p28. Post-translationally, according to the redox status, the Cys-138-Cys-176 disulfide bridge may have a role in regulating protein function by affecting its ability to bind capped mRNA.

The protein localises to the nucleus. The protein resides in the cytoplasm. Component of the protein complex eIF4F, which is involved in the recognition of the mRNA cap, ATP-dependent unwinding of 5'-terminal secondary structure and recruitment of mRNA to the ribosome. Recognizes and binds the 7-methylguanosine-containing mRNA cap during an early step in the initiation of protein synthesis and facilitates ribosome binding by inducing the unwinding of the mRNAs secondary structures. This Arabidopsis thaliana (Mouse-ear cress) protein is Eukaryotic translation initiation factor 4E-3.